The sequence spans 283 residues: Lectin subunit alpha (283 aa).

Positions Met-1 to Ala-23 are cleaved as a signal peptide. A C-type lectin domain is found at His-51–Pro-159. 2 disulfides stabilise this stretch: Cys-53/Cys-157 and Cys-132/Cys-149.

In terms of biological role, role in the defense system of the organism against microorganisms. This lectin binds galactose. The polypeptide is Lectin subunit alpha (Sarcophaga peregrina (Flesh fly)).